We begin with the raw amino-acid sequence, 49 residues long: Sperm protamine P1 (49 aa).

The protein belongs to the protamine P1 family. Testis.

Its subcellular location is the nucleus. The protein localises to the chromosome. Protamines substitute for histones in the chromatin of sperm during the haploid phase of spermatogenesis. They compact sperm DNA into a highly condensed, stable and inactive complex. This is Sperm protamine P1 (PRM1) from Pteropus hypomelanus (Island flying fox).